The primary structure comprises 278 residues: Undecaprenyl-diphosphatase 2 (278 aa).

The next 7 helical transmembrane spans lie at 1–21 (MSII…FLPI), 38–58 (FPGF…VILY), 85–105 (FMFA…GLLL), 118–138 (FIAG…RFFV), 191–211 (SFLL…GDLL), 223–243 (PLII…IWLI), and 251–271 (LIYF…YFDH).

This sequence belongs to the UppP family.

The protein resides in the cell membrane. It carries out the reaction di-trans,octa-cis-undecaprenyl diphosphate + H2O = di-trans,octa-cis-undecaprenyl phosphate + phosphate + H(+). In terms of biological role, catalyzes the dephosphorylation of undecaprenyl diphosphate (UPP). Confers resistance to bacitracin. The protein is Undecaprenyl-diphosphatase 2 of Halalkalibacterium halodurans (strain ATCC BAA-125 / DSM 18197 / FERM 7344 / JCM 9153 / C-125) (Bacillus halodurans).